We begin with the raw amino-acid sequence, 695 residues long: Segment polarity protein dishevelled homolog DVL-1 (695 aa).

Residues 1-85 enclose the DIX domain; that stretch reads MAETKIIYHM…RVVSWLVLAE (85 aa). The tract at residues 89 to 237 is disordered; sequence SDAGSQGTDS…LRQADRASSF (149 aa). The segment covering 142–151 has biased composition (basic residues); sequence SHRRERARRR. A compositionally biased stretch (basic and acidic residues) spans 152–171; that stretch reads NREEAARTNGHPRGDRRRDV. The span at 176-192 shows a compositional bias: low complexity; the sequence is DSASTALSSELESSSFV. S194 bears the Phosphoserine mark. Positions 200-214 are enriched in low complexity; the sequence is TSRLSSSTEQSTSSR. Residues 215–228 are compositionally biased toward basic residues; that stretch reads LIRKHKRRRRKQRL. Residues 251–323 form the PDZ domain; sequence TVTLNMERHH…NDDAVRVLRE (73 aa). A DEP domain is found at 425–499; the sequence is PDSGLEIRDR…SEQCYYVFGD (75 aa). The tract at residues 543–667 is disordered; the sequence is PGPPPCFPPA…PGGPPVRELA (125 aa). Over residues 551–580 the composition is skewed to low complexity; the sequence is PAYQDPGFSYGSGSTGSQQSEGSKSSGSTR. Over residues 625 to 636 the composition is skewed to polar residues; the sequence is SRGSSPRSQASA.

The protein belongs to the DSH family. Interacts with CXXC4. Interacts (via PDZ domain) with NXN. Interacts with BRD7 and INVS. Interacts (via PDZ domain) with VANGL1 and VANGL2 (via C-terminus). Interacts with ARRB1; the interaction is enhanced by phosphorylation of DVL1. Interacts with CYLD. Interacts (via PDZ domain) with RYK. Self-associates (via DIX domain) and forms higher homooligomers. Interacts (via PDZ domain) with DACT1 and FZD7, where DACT1 and FZD7 compete for the same binding site. Interacts (via DEP domain) with MUSK; the interaction is direct and mediates the formation a DVL1, MUSK and PAK1 ternary complex involved in AChR clustering. Interacts (via PDZ domain) with TMEM88. Interacts with DCDC2. Interacts with FOXK2. Interacts with PKD1 (via extracellular domain). Interacts (via PDZ domain) with CCDC88C/DAPLE; competes with CCDC88C for binding to frizzled receptor FZD7 and dissociates from CCDC88C following initiation of non-canonical Wnt signaling when CCDC88C displaces DVL1 from ligand-activated FZD7. Ubiquitinated; undergoes both 'Lys-48'-linked ubiquitination, leading to its subsequent degradation by the ubiquitin-proteasome pathway, and 'Lys-63'-linked ubiquitination. The interaction with INVS is required for ubiquitination. Deubiquitinated by CYLD, which acts on 'Lys-63'-linked ubiquitin chains.

The protein localises to the cell membrane. It is found in the cytoplasm. The protein resides in the cytosol. Its subcellular location is the cytoplasmic vesicle. Functionally, participates in Wnt signaling by binding to the cytoplasmic C-terminus of frizzled family members and transducing the Wnt signal to down-stream effectors. Plays a role both in canonical and non-canonical Wnt signaling. Plays a role in the signal transduction pathways mediated by multiple Wnt genes. Required for LEF1 activation upon WNT1 and WNT3A signaling. DVL1 and PAK1 form a ternary complex with MUSK which is important for MUSK-dependent regulation of AChR clustering during the formation of the neuromuscular junction (NMJ). The chain is Segment polarity protein dishevelled homolog DVL-1 (DVL1) from Homo sapiens (Human).